Here is an 81-residue protein sequence, read N- to C-terminus: UPF0248 protein TK0315 (81 aa).

This sequence belongs to the UPF0248 family.

The polypeptide is UPF0248 protein TK0315 (Thermococcus kodakarensis (strain ATCC BAA-918 / JCM 12380 / KOD1) (Pyrococcus kodakaraensis (strain KOD1))).